The chain runs to 308 residues: Flavonol synthase 3 (308 aa).

Residues 167–267 (TIEYLMKINY…RISWPVFVES (101 aa)) form the Fe2OG dioxygenase domain. 175 to 177 (NYY) lines the 2-oxoglutarate pocket. Histidine 192, aspartate 194, and histidine 248 together coordinate Fe cation. 258–260 (RIS) provides a ligand contact to 2-oxoglutarate.

It belongs to the iron/ascorbate-dependent oxidoreductase family. It depends on Fe(2+) as a cofactor. In terms of tissue distribution, widely expressed at low levels.

It catalyses the reaction a (2R,3R)-dihydroflavonol + 2-oxoglutarate + O2 = a flavonol + succinate + CO2 + H2O. It participates in secondary metabolite biosynthesis; flavonoid biosynthesis. Catalyzes the formation of flavonols from dihydroflavonols. Possesses low activity in vitro towards dihydrokaempferol and dihydroquercetin producing kaempferol and quercitin, respectively. The polypeptide is Flavonol synthase 3 (Arabidopsis thaliana (Mouse-ear cress)).